An 88-amino-acid polypeptide reads, in one-letter code: Small ribosomal subunit protein uS15 (88 aa).

It belongs to the universal ribosomal protein uS15 family. In terms of assembly, part of the 30S ribosomal subunit. Forms a bridge to the 50S subunit in the 70S ribosome, contacting the 23S rRNA.

One of the primary rRNA binding proteins, it binds directly to 16S rRNA where it helps nucleate assembly of the platform of the 30S subunit by binding and bridging several RNA helices of the 16S rRNA. Its function is as follows. Forms an intersubunit bridge (bridge B4) with the 23S rRNA of the 50S subunit in the ribosome. The protein is Small ribosomal subunit protein uS15 of Mesomycoplasma flocculare (Mycoplasma flocculare).